A 270-amino-acid polypeptide reads, in one-letter code: MESTIQPLDRVFLHLGPITIYWYGVIIGTGVLIGLWLATREAVRRGLPKETFVDLVLFAVPIAIVCARAYYVLFEWHYYSKHLSEIPKVWQGGLAIHGGLIGAVATGAVFARARGLSFWKLADIAAPSIILGQAIGRWGNFMNQEAHGGPVSRQFLENLHLPDWIINQMYIDGRYWHPTFLYESLWNLVGFFLLLWLRRVNLRRGELFLSYLIWYSVGRFWIEGMRTDSLMLAGSLRAAQVVSVTLIVLSIALWIVRRAKGWAKARYQDE.

The next 4 membrane-spanning stretches (helical) occupy residues 18 to 38 (ITIY…LWLA), 55 to 75 (LVLF…VLFE), 90 to 110 (WQGG…GAVF), and 115 to 135 (GLSF…GQAI). Arg-137 contacts a 1,2-diacyl-sn-glycero-3-phospho-(1'-sn-glycerol). 3 helical membrane-spanning segments follow: residues 177–197 (HPTF…LLWL), 205–225 (GELF…IEGM), and 236–256 (LRAA…LWIV).

Belongs to the Lgt family.

The protein resides in the cell membrane. It catalyses the reaction L-cysteinyl-[prolipoprotein] + a 1,2-diacyl-sn-glycero-3-phospho-(1'-sn-glycerol) = an S-1,2-diacyl-sn-glyceryl-L-cysteinyl-[prolipoprotein] + sn-glycerol 1-phosphate + H(+). The protein operates within protein modification; lipoprotein biosynthesis (diacylglyceryl transfer). Functionally, catalyzes the transfer of the diacylglyceryl group from phosphatidylglycerol to the sulfhydryl group of the N-terminal cysteine of a prolipoprotein, the first step in the formation of mature lipoproteins. The protein is Phosphatidylglycerol--prolipoprotein diacylglyceryl transferase of Geobacillus kaustophilus (strain HTA426).